The following is a 134-amino-acid chain: Cilia- and flagella-associated protein 144 (134 aa).

The tract at residues Gln76–Asp95 is disordered.

The protein belongs to the CFAP144 family. In terms of assembly, microtubule inner protein component of sperm flagellar doublet microtubules.

The protein resides in the cytoplasm. It localises to the cytoskeleton. The protein localises to the cilium axoneme. Its subcellular location is the flagellum axoneme. In terms of biological role, microtubule inner protein (MIP) part of the dynein-decorated doublet microtubules (DMTs) in cilia axoneme, which is required for motile cilia beating. The chain is Cilia- and flagella-associated protein 144 from Homo sapiens (Human).